The sequence spans 448 residues: Probable glycine dehydrogenase (decarboxylating) subunit 1 (448 aa).

The protein belongs to the GcvP family. N-terminal subunit subfamily. In terms of assembly, the glycine cleavage system is composed of four proteins: P, T, L and H. In this organism, the P 'protein' is a heterodimer of two subunits.

The enzyme catalyses N(6)-[(R)-lipoyl]-L-lysyl-[glycine-cleavage complex H protein] + glycine + H(+) = N(6)-[(R)-S(8)-aminomethyldihydrolipoyl]-L-lysyl-[glycine-cleavage complex H protein] + CO2. Its function is as follows. The glycine cleavage system catalyzes the degradation of glycine. The P protein binds the alpha-amino group of glycine through its pyridoxal phosphate cofactor; CO(2) is released and the remaining methylamine moiety is then transferred to the lipoamide cofactor of the H protein. This Staphylococcus aureus (strain Mu3 / ATCC 700698) protein is Probable glycine dehydrogenase (decarboxylating) subunit 1.